The sequence spans 279 residues: Acyl-coenzyme A thioesterase MBLAC2 (279 aa).

N-acetylserine is present on Ser-2. Zn(2+) contacts are provided by His-83, His-85, Asp-87, His-88, His-170, Asp-189, and His-231. Cys-254 is lipidated: S-palmitoyl cysteine.

Belongs to the metallo-beta-lactamase superfamily. Glyoxalase II family. Zn(2+) serves as cofactor. Post-translationally, palmitoylated on Cys-254 by ZDHHC20.

It localises to the endoplasmic reticulum membrane. The protein localises to the cell membrane. It carries out the reaction hexadecanoyl-CoA + H2O = hexadecanoate + CoA + H(+). The catalysed reaction is dodecanoyl-CoA + H2O = dodecanoate + CoA + H(+). It catalyses the reaction tetradecanoyl-CoA + H2O = tetradecanoate + CoA + H(+). The enzyme catalyses octadecanoyl-CoA + H2O = octadecanoate + CoA + H(+). It carries out the reaction a beta-lactam + H2O = a substituted beta-amino acid. With respect to regulation, beta-lactamase activity is inhibited by sulbactam. Functionally, acyl-CoA thioesterases are a group of enzymes that catalyze the hydrolysis of acyl-CoAs to the free fatty acid and coenzyme A (CoASH), providing the potential to regulate intracellular levels of acyl-CoAs, free fatty acids and CoASH. Has an acyl-CoA thioesterase activity towards the long chain fatty acyl-CoA thioester palmitoyl-CoA (hexadecanoyl-CoA; C16:0-CoA). Displays a substrate preference for fatty acyl-CoAs with chain-lengths C12-C18. Possesses beta-lactamase activity, catalyzing the hydrolysis of penicillin G and nitrocefin. Exhibits no activity towards other beta-lactam antibiotic classes including cephalosporins (cefotaxime) and carbapenems (imipenem). The sequence is that of Acyl-coenzyme A thioesterase MBLAC2 (MBLAC2) from Homo sapiens (Human).